The following is a 1112-amino-acid chain: MGVQGFQDYIEKHCPSAVVPVELQKLARGSLVGGGRQRPPQTPLRLLVDADNCLHRLYGGFYTDWVSGGQWNHMLGYLAALAKACFGGNIELFVFFNGALEKARLHEWVKRQGNERQTAQQIVSHVQNKGTPPPKVWFLPPVCMAHCIRLALIRFHVKVAQSIEDHHQEVIGFCRENGFHGLVAYDSDYALCNIPYYFSAHALKLSRNGKSLTTSQYLMHEVAKQLDLNPNRFPIFAALLGNHILPDEDLASFHWSLLGPEHPLASLKVRAHQLVLPPCDVVIKAVADYVRNIHDTSDLDAIAKDVFQHSQSRTDDKVIRFKRAVGYYSATSKPMPFHPPHYLARPNPFGMPGMVPPYVPPQMLNIPQTSLQAKPAVPQVPSPGGTPGQAPYPYSLSEPALTLDTSGKNLTEQNSYSNIPHEGKHTPLYERSSPINLAQSGSPNHVDSAYFPGSSTSSSSDNDEGGGGATNHISGNKIGWEKTGSHAEPLARGDPGDQVKVEGSSTASSGSQLAEGKGSHMGTVQPIPCLLSMPTRNHMDITTPPLPPVAPEVLRVAEHRHKKGLMYPYIFHILTKGEIKIAVSIEDEANKDLPPAALLYRPVRQYVYGVLFSLAESRKKTERLAFRKNRLPPEFSPLIIKEWAAYKGKSPQTPELVEALAFREWTCPNLKRLWLGKAVEDKNRRMRAFLACMRSDTPAMLNPANVPTHLMVLCCVLRYMVQWPGARILRRQELDAFLAQALSPKLYEPDQLQELKIDNLDPRGIQLSALFMSGVDMALFANDACGQPIPWEHCCPWMYFDGKLFQSKLLKASREKTPLIDLCDGQAEQAAKVEKMRQSILEGLSFSRQNHPLPFPPPPALPFYPASVYPRHFGPVPPSQGRGRGFAGVCGFGGHYGETVATGPYRAFRVTAASGHCGAFSGSDSSRTSKSQGGVQPIPSQGGKLEIAGTVVGHWAGSRRGRGGRGPFPLQVVSVGGPARGRPRGVISTPVIRTFGRGGRYYGRGYKSQGAIQGRPPYAASAEEVAKELKSKSGESKSSAVSLAENGVMAEEKPVPQLNGSTGDPRVPSHSESALNNDSKPCNTNPHLNALSTDSACRREAALEAAVLNKEE.

Residues 339 to 403 (PPHYLARPNP…YSLSEPALTL (65 aa)) form an interaction with YES1, SRC and FYN region. The segment at 372-525 (QAKPAVPQVP…GKGSHMGTVQ (154 aa)) is disordered. Composition is skewed to polar residues over residues 403 to 418 (LDTSGKNLTEQNSYSN) and 433 to 445 (SPINLAQSGSPNH). Basic and acidic residues predominate over residues 479-500 (GWEKTGSHAEPLARGDPGDQVK). Over residues 503–512 (GSSTASSGSQ) the composition is skewed to polar residues. Thr653 is subject to Phosphothreonine. The RNA binding stretch occupies residues 827 to 1112 (AEQAAKVEKM…LEAAVLNKEE (286 aa)). An omega-N-methylarginine mark is found at Arg871, Arg882, and Arg884. A disordered region spans residues 919–943 (AFSGSDSSRTSKSQGGVQPIPSQGG). The segment covering 922–934 (GSDSSRTSKSQGG) has biased composition (polar residues). Lys930 carries the post-translational modification N6-acetyllysine. The residue at position 958 (Ser958) is a Phosphoserine. An omega-N-methylarginine mark is found at Arg980 and Arg984. Residues Ser1021 and Ser1042 each carry the phosphoserine modification. The segment at 1030–1090 (KSKSGESKSS…PCNTNPHLNA (61 aa)) is disordered. Polar residues predominate over residues 1070–1090 (HSESALNNDSKPCNTNPHLNA).

It belongs to the constitutive coactivator of PPAR-gamma family. In terms of assembly, interacts with PURA. Interacts with SRC family protein kinases YES1, SRC and FYN. Upon tyrosine phosphorylation, interacts with PIK3R1. Interacts with IGF2BP1/IMP-1 in an RNA-dependent manner. Arg-980 is dimethylated, probably to asymmetric dimethylarginine. In terms of processing, phosphorylated on tyrosine by src family kinases upon ultraviolet exposure. As to expression, in the brain, predominantly expressed in the hippocampus, caudate putamen, cerebral cortex and cerebellum. Expression is restricted to neurons (at protein level).

Its subcellular location is the cytoplasm. It is found in the cell membrane. Its function is as follows. Component of the oxidative stress-induced survival signaling. May regulate the activation of SRC family protein kinases. May act as a scaffolding protein enabling SRC family protein kinases to phosphorylate and activate PI3-kinase. Binds IGF2 RNA and promotes the production of IGF2 protein. The chain is Constitutive coactivator of PPAR-gamma-like protein 1 (FAM120A) from Mus musculus (Mouse).